The sequence spans 31 residues: Photosystem II reaction center protein T (31 aa).

The helical transmembrane segment at 3–23 (SVAYIIVLAMALSVLFFAIAF) threads the bilayer.

The protein belongs to the PsbT family. PSII is composed of 1 copy each of membrane proteins PsbA, PsbB, PsbC, PsbD, PsbE, PsbF, PsbH, PsbI, PsbJ, PsbK, PsbL, PsbM, PsbT, PsbX, PsbY, PsbZ, Psb30/Ycf12, peripheral proteins PsbO, CyanoQ (PsbQ), PsbU, PsbV and a large number of cofactors. It forms dimeric complexes.

It is found in the cellular thylakoid membrane. Functionally, found at the monomer-monomer interface of the photosystem II (PS II) dimer, plays a role in assembly and dimerization of PSII. PSII is a light-driven water plastoquinone oxidoreductase, using light energy to abstract electrons from H(2)O, generating a proton gradient subsequently used for ATP formation. This chain is Photosystem II reaction center protein T, found in Picosynechococcus sp. (strain ATCC 27264 / PCC 7002 / PR-6) (Agmenellum quadruplicatum).